The primary structure comprises 98 residues: Small ribosomal subunit protein eS24 (98 aa).

A disordered region spans residues glycine 76–alanine 98. A compositionally biased stretch (basic and acidic residues) spans glycine 89–alanine 98.

It belongs to the eukaryotic ribosomal protein eS24 family.

The protein is Small ribosomal subunit protein eS24 of Methanosphaerula palustris (strain ATCC BAA-1556 / DSM 19958 / E1-9c).